A 736-amino-acid chain; its full sequence is ABC transporter G family member 16 (736 aa).

The 245-residue stretch at 88 to 332 (LDFHDLVPWR…FAGFGNPIPE (245 aa)) folds into the ABC transporter domain. 125–132 (GASGSGKS) contacts ATP. The next 7 helical transmembrane spans lie at 410–430 (SVINHGGGTLAVPAFANPFWI), 449–469 (LLGMRLATVIVTGFILATVFW), 484–504 (FFAFAMSTMFYTCADALPVFL), 525–545 (VLSHAIVTFPSLIFLSLAFAV), 569–589 (ASFWSGSSFVTFLSGVVPHVM), 590–610 (LGYTIVVAILAYFLLFSGFFI), and 709–729 (LLITVGFGFLFRILFYLCLLL). The region spanning 430–640 (IEIKTLTRRS…PYEAVLQNEF (211 aa)) is the ABC transmembrane type-2 domain.

Belongs to the ABC transporter superfamily. ABCG family. Eye pigment precursor importer (TC 3.A.1.204) subfamily.

Its subcellular location is the membrane. This chain is ABC transporter G family member 16 (ABCG16), found in Arabidopsis thaliana (Mouse-ear cress).